The sequence spans 210 residues: Mitochondrial coenzyme A diphosphatase NUDT8 (210 aa).

Positions 25 to 172 constitute a Nudix hydrolase domain; that stretch reads LRSRPAAAAV…HFSYTLPVFL (148 aa). K70 bears the N6-succinyllysine mark. The Nudix box motif lies at 70–91; sequence KCDPDDQDVIHTALRETQEELG. Mg(2+) is bound by residues E85 and E89. K96 carries the N6-succinyllysine modification.

It belongs to the Nudix hydrolase family. As to quaternary structure, monomer. It depends on Mg(2+) as a cofactor. Mn(2+) is required as a cofactor. In terms of tissue distribution, expressed at the highest levels in the kidneys, heart, brown adipose tissue and liver (at protein level). Expressed at lower levels in the brain, skeletal muscle, and white adipose tissue (at protein level).

Its subcellular location is the mitochondrion. The enzyme catalyses an acyl-CoA + H2O = an acyl-4'-phosphopantetheine + adenosine 3',5'-bisphosphate + 2 H(+). The catalysed reaction is CoA + H2O = (R)-4'-phosphopantetheine + adenosine 3',5'-bisphosphate + 2 H(+). It catalyses the reaction acetyl-CoA + H2O = S-acetyl-4'-phosphopantetheine + adenosine 3',5'-bisphosphate + 2 H(+). It carries out the reaction butanoyl-CoA + H2O = S-butanoyl-4'-phosphopantetheine + adenosine 3',5'-bisphosphate + 2 H(+). The enzyme catalyses hexanoyl-CoA + H2O = hexanoyl-4'-phosphopantetheine + adenosine 3',5'-bisphosphate + 2 H(+). The catalysed reaction is octanoyl-CoA + H2O = S-octanoyl-4'-phosphopantetheine + adenosine 3',5'-bisphosphate + 2 H(+). It catalyses the reaction propanoyl-CoA + H2O = propanoyl-4'-phosphopantetheine + adenosine 3',5'-bisphosphate + 2 H(+). It carries out the reaction malonyl-CoA + H2O = malonyl-4'-phosphopantetheine + adenosine 3',5'-bisphosphate + 2 H(+). The enzyme catalyses succinyl-CoA + H2O = succinyl-4'-phosphopantetheine + adenosine 3',5'-bisphosphate + 2 H(+). The catalysed reaction is a 5'-end CoA-ribonucleoside in mRNA + H2O = a 5'-end phospho-adenosine-phospho-ribonucleoside in mRNA + (R)-4'-phosphopantetheine + 2 H(+). Functionally, acyl-CoA diphosphatase that mediates the hydrolysis of a wide range of CoA and CoA esters yielding 3',5'-ADP and the corresponding 4'-phosphopantetheine derivative as products. Hydrolyzes short- and medium-chain acyl-CoAs, exhibiting the highest activity toward free CoA, hexanoyl-CoA, and octanoyl-CoA and the lowest activity against acetyl-CoA. Exhibits decapping activity towards dpCoA-capped RNAs in vitro. The polypeptide is Mitochondrial coenzyme A diphosphatase NUDT8 (Nudt8) (Mus musculus (Mouse)).